The chain runs to 101 residues: Small ribosomal subunit protein bS6 (101 aa).

The protein belongs to the bacterial ribosomal protein bS6 family.

In terms of biological role, binds together with bS18 to 16S ribosomal RNA. This Paenarthrobacter aurescens (strain TC1) protein is Small ribosomal subunit protein bS6.